Here is a 256-residue protein sequence, read N- to C-terminus: V-type proton ATPase subunit D (256 aa).

Residues 211-230 (QNETAKLDAEMKLKRDRAEQ) show a composition bias toward basic and acidic residues. Residues 211–256 (QNETAKLDAEMKLKRDRAEQDASEVAADEEPQGETLVADQEDDVIF) are disordered.

It belongs to the V-ATPase D subunit family. In terms of assembly, V-ATPase is a heteromultimeric enzyme composed of a peripheral catalytic V1 complex (components A to H) attached to an integral membrane V0 proton pore complex (components: a, c, c', c'', d, e, f and VOA1). Interacts with RAV1 and RAV2 components of the RAVE complex, which are essential for the stability and assembly of V-ATPase.

It localises to the vacuole membrane. Functionally, subunit of the V1 complex of vacuolar(H+)-ATPase (V-ATPase), a multisubunit enzyme composed of a peripheral complex (V1) that hydrolyzes ATP and a membrane integral complex (V0) that translocates protons. V-ATPase is responsible for acidifying and maintaining the pH of intracellular compartments. The polypeptide is V-type proton ATPase subunit D (Saccharomyces cerevisiae (strain ATCC 204508 / S288c) (Baker's yeast)).